Consider the following 356-residue polypeptide: Histidinol-phosphate aminotransferase (356 aa).

The residue at position 211 (lysine 211) is an N6-(pyridoxal phosphate)lysine.

Belongs to the class-II pyridoxal-phosphate-dependent aminotransferase family. Histidinol-phosphate aminotransferase subfamily. Homodimer. Pyridoxal 5'-phosphate serves as cofactor.

It carries out the reaction L-histidinol phosphate + 2-oxoglutarate = 3-(imidazol-4-yl)-2-oxopropyl phosphate + L-glutamate. It functions in the pathway amino-acid biosynthesis; L-histidine biosynthesis; L-histidine from 5-phospho-alpha-D-ribose 1-diphosphate: step 7/9. The chain is Histidinol-phosphate aminotransferase from Aeromonas hydrophila subsp. hydrophila (strain ATCC 7966 / DSM 30187 / BCRC 13018 / CCUG 14551 / JCM 1027 / KCTC 2358 / NCIMB 9240 / NCTC 8049).